The primary structure comprises 347 residues: NADH-quinone oxidoreductase subunit H (347 aa).

The next 9 membrane-spanning stretches (helical) occupy residues 13-33 (LLIL…VAYI), 50-70 (PNVV…KFVF), 82-102 (GVFL…WAVI), 115-135 (VGIL…IMAG), 161-181 (IGFV…TDIV), 198-218 (FLDW…ISAL), 248-268 (FLLF…LTTI), 286-306 (VPGV…FALV), and 321-341 (LGWK…AAFL).

This sequence belongs to the complex I subunit 1 family. As to quaternary structure, NDH-1 is composed of 14 different subunits. Subunits NuoA, H, J, K, L, M, N constitute the membrane sector of the complex.

The protein resides in the cell inner membrane. It carries out the reaction a quinone + NADH + 5 H(+)(in) = a quinol + NAD(+) + 4 H(+)(out). Its function is as follows. NDH-1 shuttles electrons from NADH, via FMN and iron-sulfur (Fe-S) centers, to quinones in the respiratory chain. The immediate electron acceptor for the enzyme in this species is believed to be ubiquinone. Couples the redox reaction to proton translocation (for every two electrons transferred, four hydrogen ions are translocated across the cytoplasmic membrane), and thus conserves the redox energy in a proton gradient. This subunit may bind ubiquinone. This is NADH-quinone oxidoreductase subunit H from Chelativorans sp. (strain BNC1).